The primary structure comprises 156 residues: 6,7-dimethyl-8-ribityllumazine synthase (156 aa).

Residues Phe23, Ala57–Glu59, and Ala81–Ile83 contribute to the 5-amino-6-(D-ribitylamino)uracil site. Gly86–Thr87 is a (2S)-2-hydroxy-3-oxobutyl phosphate binding site. His89 (proton donor) is an active-site residue. Phe114 contributes to the 5-amino-6-(D-ribitylamino)uracil binding site. A (2S)-2-hydroxy-3-oxobutyl phosphate-binding site is contributed by Arg128.

The protein belongs to the DMRL synthase family.

The enzyme catalyses (2S)-2-hydroxy-3-oxobutyl phosphate + 5-amino-6-(D-ribitylamino)uracil = 6,7-dimethyl-8-(1-D-ribityl)lumazine + phosphate + 2 H2O + H(+). Its pathway is cofactor biosynthesis; riboflavin biosynthesis; riboflavin from 2-hydroxy-3-oxobutyl phosphate and 5-amino-6-(D-ribitylamino)uracil: step 1/2. Its function is as follows. Catalyzes the formation of 6,7-dimethyl-8-ribityllumazine by condensation of 5-amino-6-(D-ribitylamino)uracil with 3,4-dihydroxy-2-butanone 4-phosphate. This is the penultimate step in the biosynthesis of riboflavin. In Helicobacter pylori (strain Shi470), this protein is 6,7-dimethyl-8-ribityllumazine synthase.